The primary structure comprises 250 residues: Protein lin-28 homolog B (250 aa).

Disordered stretches follow at residues 1–27 and 98–126; these read MAEA…ESPL and RVTG…KPKG. The segment covering 9-18 has biased composition (basic and acidic residues); it reads GGEEPGRLPE. In terms of domain architecture, CSD spans 29-102; that stretch reads HGAGHCKWFN…GLESIRVTGP (74 aa). Positions 114–125 are enriched in basic residues; it reads PKGKTVQKRKPK. 2 CCHC-type zinc fingers span residues 127–144 and 149–166; these read DRCY…ECSL and KKCH…NCPH. Residues C129, C132, H137, C142, C151, C154, H159, and C164 each coordinate Zn(2+). The segment at 165 to 250 is disordered; the sequence is PHKTVSQQPT…GPSVQKRKKT (86 aa). The segment covering 168–177 has biased composition (polar residues); the sequence is TVSQQPTSSQ. Residues 200–209 are compositionally biased toward low complexity; the sequence is GYSSPSYSQE. Over residues 210 to 219 the composition is skewed to basic and acidic residues; it reads GRSEISERSG.

It belongs to the lin-28 family.

The protein resides in the nucleus. It is found in the nucleolus. In terms of biological role, suppressor of specific microRNA (miRNA) biogenesis. Binds target primary miRNA transcripts and sequester them in the nucleolus, away from the microprocessor complex, hence preventing their processing into mature miRNA. The specific interaction with target pri-miRNAs occurs via an 5'-GGAG-3' motif in the pre-miRNA terminal loop. The sequence is that of Protein lin-28 homolog B (LIN28B) from Gallus gallus (Chicken).